The following is a 1277-amino-acid chain: Myosin-1 (1277 aa).

A compositionally biased stretch (basic residues) spans Met-1–Pro-13. The tract at residues Met-1–Lys-27 is disordered. The Myosin motor domain maps to Val-39–Asp-718. Residue Gly-132–Thr-139 participates in ATP binding. Ser-360 is subject to Phosphoserine. The segment at Ile-407–Ala-489 is actin-binding. The tract at residues Leu-567 to Ile-587 is disordered. IQ domains are found at residues His-722–Cys-742 and Ala-743–Gln-768. In terms of domain architecture, TH1 spans Arg-776–Ala-965. Disordered regions lie at residues Tyr-952–Glu-1072 and Pro-1129–Gln-1259. The span at Pro-1015–Ser-1056 shows a compositional bias: low complexity. The segment covering Val-1057–Arg-1068 has biased composition (pro residues). In terms of domain architecture, SH3 spans Pro-1071–Pro-1129. The span at Ala-1132–Pro-1142 shows a compositional bias: pro residues. Polar residues-rich tracts occupy residues Thr-1145–Asp-1159 and Ala-1185–Pro-1197. The span at Val-1204–Pro-1224 shows a compositional bias: pro residues. Residues Pro-1226–Pro-1240 are compositionally biased toward low complexity. The span at Ser-1241–Gly-1258 shows a compositional bias: gly residues.

Belongs to the TRAFAC class myosin-kinesin ATPase superfamily. Myosin family. Post-translationally, phosphorylation of the TEDS site (Ser-360) is required for the polarization of the actin cytoskeleton. Phosphorylation probably activates the myosin-I ATPase activity.

It is found in the cytoplasm. Its subcellular location is the cytoskeleton. It localises to the actin patch. Type-I myosin implicated in the organization of the actin cytoskeleton. Required for proper actin cytoskeleton polarization. At the cell cortex, assembles in patch-like structures together with proteins from the actin-polymerizing machinery and promotes actin assembly. Functions as actin nucleation-promoting factor (NPF) for the Arp2/3 complex. The polypeptide is Myosin-1 (MYO1) (Coprinopsis cinerea (strain Okayama-7 / 130 / ATCC MYA-4618 / FGSC 9003) (Inky cap fungus)).